Here is a 237-residue protein sequence, read N- to C-terminus: Phosphatidylserine decarboxylase proenzyme (237 aa).

Catalysis depends on Ser206, which acts as the Schiff-base intermediate with substrate; via pyruvic acid. Ser206 carries the pyruvic acid (Ser); by autocatalysis modification.

The protein belongs to the phosphatidylserine decarboxylase family. PSD-A subfamily. Heterodimer of a large membrane-associated beta subunit and a small pyruvoyl-containing alpha subunit. Requires pyruvate as cofactor. Is synthesized initially as an inactive proenzyme. Formation of the active enzyme involves a self-maturation process in which the active site pyruvoyl group is generated from an internal serine residue via an autocatalytic post-translational modification. Two non-identical subunits are generated from the proenzyme in this reaction, and the pyruvate is formed at the N-terminus of the alpha chain, which is derived from the carboxyl end of the proenzyme. The post-translation cleavage follows an unusual pathway, termed non-hydrolytic serinolysis, in which the side chain hydroxyl group of the serine supplies its oxygen atom to form the C-terminus of the beta chain, while the remainder of the serine residue undergoes an oxidative deamination to produce ammonia and the pyruvoyl prosthetic group on the alpha chain.

The protein resides in the cell membrane. The catalysed reaction is a 1,2-diacyl-sn-glycero-3-phospho-L-serine + H(+) = a 1,2-diacyl-sn-glycero-3-phosphoethanolamine + CO2. Its pathway is phospholipid metabolism; phosphatidylethanolamine biosynthesis; phosphatidylethanolamine from CDP-diacylglycerol: step 2/2. Functionally, catalyzes the formation of phosphatidylethanolamine (PtdEtn) from phosphatidylserine (PtdSer). The polypeptide is Phosphatidylserine decarboxylase proenzyme (Nocardia farcinica (strain IFM 10152)).